The following is a 403-amino-acid chain: 4-hydroxy-3-methylbut-2-en-1-yl diphosphate synthase (flavodoxin) (403 aa).

The span at 1 to 16 shows a compositional bias: basic and acidic residues; it reads MNTENPIEKPFRKTGD. The interval 1 to 31 is disordered; that stretch reads MNTENPIEKPFRKTGDPVDLTSESPLHPRRK. Residues cysteine 291, cysteine 294, cysteine 326, and glutamate 333 each contribute to the [4Fe-4S] cluster site.

The protein belongs to the IspG family. [4Fe-4S] cluster is required as a cofactor.

It catalyses the reaction (2E)-4-hydroxy-3-methylbut-2-enyl diphosphate + oxidized [flavodoxin] + H2O + 2 H(+) = 2-C-methyl-D-erythritol 2,4-cyclic diphosphate + reduced [flavodoxin]. Its pathway is isoprenoid biosynthesis; isopentenyl diphosphate biosynthesis via DXP pathway; isopentenyl diphosphate from 1-deoxy-D-xylulose 5-phosphate: step 5/6. Its function is as follows. Converts 2C-methyl-D-erythritol 2,4-cyclodiphosphate (ME-2,4cPP) into 1-hydroxy-2-methyl-2-(E)-butenyl 4-diphosphate. The sequence is that of 4-hydroxy-3-methylbut-2-en-1-yl diphosphate synthase (flavodoxin) from Bifidobacterium longum (strain NCC 2705).